The chain runs to 386 residues: Methionine aminotransferase (386 aa).

The residue at position 236 (Lys-236) is an N6-(pyridoxal phosphate)lysine.

It belongs to the class-I pyridoxal-phosphate-dependent aminotransferase family. In terms of assembly, homodimer. It depends on pyridoxal 5'-phosphate as a cofactor.

The protein localises to the cytoplasm. It catalyses the reaction a 2-oxocarboxylate + L-methionine = 4-methylsulfanyl-2-oxobutanoate + an L-alpha-amino acid. In terms of biological role, shows aminotransferase activity with methionine and histidine as substrates, and to a lesser extent also with phenylalanine. This is Methionine aminotransferase (ybdL) from Escherichia coli (strain K12).